A 58-amino-acid polypeptide reads, in one-letter code: Alpha-conotoxin-like Pu1.6 (58 aa).

A signal peptide spans 1–17; the sequence is MFTVFLLVVLVTTVVFS. Positions 18–35 are excised as a propeptide; that stretch reads TSDHRPASNHENRRASKR. Disulfide bonds link Cys44-Cys50 and Cys45-Cys58. Residues 46–48 are lacks the Ser-Xaa-Pro motif that is crucial for potent interaction with nAChR; it reads TNP.

This sequence belongs to the conotoxin A superfamily. In terms of tissue distribution, expressed by the venom duct.

The protein resides in the secreted. Alpha-conotoxins act on postsynaptic membranes, they bind to the nicotinic acetylcholine receptors (nAChR) and thus inhibit them. Has possibly a distinct nAChR binding mode from other alpha-conotoxins, due to a different three residue motif (lacks the Ser-Xaa-Pro motif). The sequence is that of Alpha-conotoxin-like Pu1.6 from Conus pulicarius (Flea-bitten cone).